Reading from the N-terminus, the 618-residue chain is 2-succinyl-5-enolpyruvyl-6-hydroxy-3-cyclohexene-1-carboxylate synthase (618 aa).

Residues 192–215 are disordered; it reads DPVAERGRDGPYVDVTPGSPEPGD.

The protein belongs to the TPP enzyme family. MenD subfamily. As to quaternary structure, homodimer. The cofactor is Mg(2+). Mn(2+) serves as cofactor. Thiamine diphosphate is required as a cofactor.

The catalysed reaction is isochorismate + 2-oxoglutarate + H(+) = 5-enolpyruvoyl-6-hydroxy-2-succinyl-cyclohex-3-ene-1-carboxylate + CO2. Its pathway is quinol/quinone metabolism; 1,4-dihydroxy-2-naphthoate biosynthesis; 1,4-dihydroxy-2-naphthoate from chorismate: step 2/7. It participates in quinol/quinone metabolism; menaquinone biosynthesis. Functionally, catalyzes the thiamine diphosphate-dependent decarboxylation of 2-oxoglutarate and the subsequent addition of the resulting succinic semialdehyde-thiamine pyrophosphate anion to isochorismate to yield 2-succinyl-5-enolpyruvyl-6-hydroxy-3-cyclohexene-1-carboxylate (SEPHCHC). This chain is 2-succinyl-5-enolpyruvyl-6-hydroxy-3-cyclohexene-1-carboxylate synthase, found in Halorubrum lacusprofundi (strain ATCC 49239 / DSM 5036 / JCM 8891 / ACAM 34).